A 441-amino-acid polypeptide reads, in one-letter code: Cortexillin-2 (441 aa).

An actin-binding region spans residues 1-229 (MDLNKEWEKV…VLYTSLFFHA (229 aa)). Calponin-homology (CH) domains follow at residues 9–117 (KVQE…RKYR) and 126–231 (KSSE…HAFR). Coiled-coil stretches lie at residues 229-362 (AFRA…RLGL) and 406-430 (SFEEQAKKLASKLESENILIEKYLN).

It belongs to the cortexillin family. In terms of assembly, homodimer; parallel.

It localises to the cytoplasm. It is found in the cytoskeleton. Functionally, actin-bundling protein. When linked to F-actin the actin filaments form preferentially anti-parallel bundles that associate into meshworks. Plays a major role in cytokinesis. Negatively regulates cortical localization of rapgap1. The protein is Cortexillin-2 (ctxB) of Dictyostelium discoideum (Social amoeba).